We begin with the raw amino-acid sequence, 515 residues long: GMP synthase [glutamine-hydrolyzing] (515 aa).

One can recognise a Glutamine amidotransferase type-1 domain in the interval 6–198 (KVIILDFGSQ…VFKVAGLKAD (193 aa)). The active-site Nucleophile is the Cys-83. Residues His-172 and Glu-174 contribute to the active site. In terms of domain architecture, GMPS ATP-PPase spans 199–390 (WTMSSFVENC…LGLPEFIIWR (192 aa)). 226–232 (SGGIDST) contacts ATP.

As to quaternary structure, homodimer.

It carries out the reaction XMP + L-glutamine + ATP + H2O = GMP + L-glutamate + AMP + diphosphate + 2 H(+). The protein operates within purine metabolism; GMP biosynthesis; GMP from XMP (L-Gln route): step 1/1. Catalyzes the synthesis of GMP from XMP. The protein is GMP synthase [glutamine-hydrolyzing] of Maridesulfovibrio salexigens (strain ATCC 14822 / DSM 2638 / NCIMB 8403 / VKM B-1763) (Desulfovibrio salexigens).